Consider the following 495-residue polypeptide: uncharacterized protein (495 aa).

The first 17 residues, 1-17 (MRTLSLLILFLSTFLFA), serve as a signal peptide directing secretion.

This is an uncharacterized protein from Aquifex aeolicus (strain VF5).